The following is a 169-amino-acid chain: Peptide methionine sulfoxide reductase MsrA (169 aa).

The active site involves Cys10.

It belongs to the MsrA Met sulfoxide reductase family.

The enzyme catalyses L-methionyl-[protein] + [thioredoxin]-disulfide + H2O = L-methionyl-(S)-S-oxide-[protein] + [thioredoxin]-dithiol. It carries out the reaction [thioredoxin]-disulfide + L-methionine + H2O = L-methionine (S)-S-oxide + [thioredoxin]-dithiol. Has an important function as a repair enzyme for proteins that have been inactivated by oxidation. Catalyzes the reversible oxidation-reduction of methionine sulfoxide in proteins to methionine. The polypeptide is Peptide methionine sulfoxide reductase MsrA (Streptococcus pyogenes serotype M12 (strain MGAS2096)).